Here is a 340-residue protein sequence, read N- to C-terminus: Phosphoribosylformylglycinamidine cyclo-ligase (340 aa).

The protein belongs to the AIR synthase family.

It is found in the cytoplasm. It carries out the reaction 2-formamido-N(1)-(5-O-phospho-beta-D-ribosyl)acetamidine + ATP = 5-amino-1-(5-phospho-beta-D-ribosyl)imidazole + ADP + phosphate + H(+). The protein operates within purine metabolism; IMP biosynthesis via de novo pathway; 5-amino-1-(5-phospho-D-ribosyl)imidazole from N(2)-formyl-N(1)-(5-phospho-D-ribosyl)glycinamide: step 2/2. The protein is Phosphoribosylformylglycinamidine cyclo-ligase of Streptococcus pyogenes serotype M6 (strain ATCC BAA-946 / MGAS10394).